Here is a 228-residue protein sequence, read N- to C-terminus: Immunogenic protein MPB64 (228 aa).

A signal peptide spans 1–23; the sequence is MRIKIFMLVTAVVLLCCSGVATA.

It belongs to the RsiV family.

Its subcellular location is the secreted. The chain is Immunogenic protein MPB64 (mpb64) from Mycobacterium bovis (strain ATCC BAA-935 / AF2122/97).